Consider the following 156-residue polypeptide: Small ribosomal subunit protein uS7 (156 aa).

The protein belongs to the universal ribosomal protein uS7 family. As to quaternary structure, part of the 30S ribosomal subunit. Contacts proteins S9 and S11.

In terms of biological role, one of the primary rRNA binding proteins, it binds directly to 16S rRNA where it nucleates assembly of the head domain of the 30S subunit. Is located at the subunit interface close to the decoding center, probably blocks exit of the E-site tRNA. The chain is Small ribosomal subunit protein uS7 from Nostoc punctiforme (strain ATCC 29133 / PCC 73102).